Reading from the N-terminus, the 572-residue chain is Proline--tRNA ligase (572 aa).

It belongs to the class-II aminoacyl-tRNA synthetase family. ProS type 1 subfamily. In terms of assembly, homodimer.

It localises to the cytoplasm. It carries out the reaction tRNA(Pro) + L-proline + ATP = L-prolyl-tRNA(Pro) + AMP + diphosphate. In terms of biological role, catalyzes the attachment of proline to tRNA(Pro) in a two-step reaction: proline is first activated by ATP to form Pro-AMP and then transferred to the acceptor end of tRNA(Pro). As ProRS can inadvertently accommodate and process non-cognate amino acids such as alanine and cysteine, to avoid such errors it has two additional distinct editing activities against alanine. One activity is designated as 'pretransfer' editing and involves the tRNA(Pro)-independent hydrolysis of activated Ala-AMP. The other activity is designated 'posttransfer' editing and involves deacylation of mischarged Ala-tRNA(Pro). The misacylated Cys-tRNA(Pro) is not edited by ProRS. This is Proline--tRNA ligase from Escherichia coli O139:H28 (strain E24377A / ETEC).